A 370-amino-acid polypeptide reads, in one-letter code: DNA replication and repair protein RecF (370 aa).

30-37 (GDNGSGKT) is an ATP binding site.

It belongs to the RecF family.

It is found in the cytoplasm. Functionally, the RecF protein is involved in DNA metabolism; it is required for DNA replication and normal SOS inducibility. RecF binds preferentially to single-stranded, linear DNA. It also seems to bind ATP. This Stutzerimonas stutzeri (strain A1501) (Pseudomonas stutzeri) protein is DNA replication and repair protein RecF.